We begin with the raw amino-acid sequence, 397 residues long: Acetate kinase (397 aa).

Asn-8 contributes to the Mg(2+) binding site. Residue Lys-15 coordinates ATP. Position 89 (Arg-89) interacts with substrate. Residue Asp-146 is the Proton donor/acceptor of the active site. ATP-binding positions include His-206 to Gly-210, Asp-281 to Arg-283, and Gly-328 to Asn-332. Residue Glu-381 coordinates Mg(2+).

This sequence belongs to the acetokinase family. In terms of assembly, homodimer. Mg(2+) is required as a cofactor. Requires Mn(2+) as cofactor.

It localises to the cytoplasm. The enzyme catalyses acetate + ATP = acetyl phosphate + ADP. It functions in the pathway metabolic intermediate biosynthesis; acetyl-CoA biosynthesis; acetyl-CoA from acetate: step 1/2. Its function is as follows. Catalyzes the formation of acetyl phosphate from acetate and ATP. Can also catalyze the reverse reaction. The polypeptide is Acetate kinase (Oceanobacillus iheyensis (strain DSM 14371 / CIP 107618 / JCM 11309 / KCTC 3954 / HTE831)).